The sequence spans 934 residues: Aconitate hydratase A (934 aa).

The tract at residues 398 to 454 (EPVDESLPAKRMDSEGAVQKEGEDVAGYNSSRAGHGESAAEGAAGRQSNPVVVSSPN) is disordered. Over residues 404 to 420 (LPAKRMDSEGAVQKEGE) the composition is skewed to basic and acidic residues. Residues 427 to 445 (SSRAGHGESAAEGAAGRQS) show a composition bias toward low complexity. [4Fe-4S] cluster is bound by residues cysteine 473, cysteine 539, and cysteine 542.

The protein belongs to the aconitase/IPM isomerase family. As to quaternary structure, monomer. It depends on [4Fe-4S] cluster as a cofactor.

The enzyme catalyses citrate = D-threo-isocitrate. The catalysed reaction is (2S,3R)-3-hydroxybutane-1,2,3-tricarboxylate = 2-methyl-cis-aconitate + H2O. It functions in the pathway carbohydrate metabolism; tricarboxylic acid cycle; isocitrate from oxaloacetate: step 2/2. Its pathway is organic acid metabolism; propanoate degradation. Functionally, involved in the catabolism of short chain fatty acids (SCFA) via the tricarboxylic acid (TCA)(acetyl degradation route) and probably via the 2-methylcitrate cycle I (propionate degradation route). Catalyzes the reversible isomerization of citrate to isocitrate via cis-aconitate. Could catalyze the hydration of 2-methyl-cis-aconitate to yield (2R,3S)-2-methylisocitrate. The apo form of AcnA functions as a RNA-binding regulatory protein. This is Aconitate hydratase A (acn) from Corynebacterium diphtheriae (strain ATCC 700971 / NCTC 13129 / Biotype gravis).